A 318-amino-acid chain; its full sequence is Malonyl CoA-acyl carrier protein transacylase, mitochondrial (318 aa).

This sequence belongs to the FabD family.

Its subcellular location is the mitochondrion. It carries out the reaction holo-[ACP] + malonyl-CoA = malonyl-[ACP] + CoA. Its pathway is lipid metabolism; fatty acid biosynthesis. Involved in biosynthesis of fatty acids in mitochondria. This Schizosaccharomyces pombe (strain 972 / ATCC 24843) (Fission yeast) protein is Malonyl CoA-acyl carrier protein transacylase, mitochondrial (mct1).